The primary structure comprises 233 residues: DNA repair protein RecO (233 aa).

Belongs to the RecO family.

Functionally, involved in DNA repair and RecF pathway recombination. This is DNA repair protein RecO from Pseudomonas aeruginosa (strain UCBPP-PA14).